Reading from the N-terminus, the 377-residue chain is PqqA peptide cyclase (377 aa).

Residues 12–228 form the Radical SAM core domain; that stretch reads FGIPLAVLLE…EAARERLKGQ (217 aa). The [4Fe-4S] cluster site is built by Cys-26, Cys-30, and Cys-33.

Belongs to the radical SAM superfamily. PqqE family. As to quaternary structure, interacts with PqqD. The interaction is necessary for activity of PqqE. [4Fe-4S] cluster is required as a cofactor.

It catalyses the reaction [PQQ precursor protein] + S-adenosyl-L-methionine = E-Y cross-linked-[PQQ precursor protein] + 5'-deoxyadenosine + L-methionine + H(+). Its pathway is cofactor biosynthesis; pyrroloquinoline quinone biosynthesis. Its function is as follows. Catalyzes the cross-linking of a glutamate residue and a tyrosine residue in the PqqA protein as part of the biosynthesis of pyrroloquinoline quinone (PQQ). The chain is PqqA peptide cyclase from Rhodopseudomonas palustris (strain ATCC BAA-98 / CGA009).